The chain runs to 339 residues: NADH-quinone oxidoreductase subunit H (339 aa).

Transmembrane regions (helical) follow at residues 9–29, 82–102, 115–135, 161–181, 187–207, 235–255, 275–295, and 311–331; these read IFPLIIIALKVVAITIPLILC, ILFVLAPMITFILSLIGWAVI, VGVLYILAISSLSVYGIIIAG, MGLVIITVLLTTGTLNLSQIV, MPWWIDLMLMPMGVVFFISVL, MGFALFFLGEYANMILVSAMT, IPGFFWFVFKVGFLLFCFLWI, and GWKVFLPLTLFWVVLVSSVLI.

This sequence belongs to the complex I subunit 1 family. NDH-1 is composed of 14 different subunits. Subunits NuoA, H, J, K, L, M, N constitute the membrane sector of the complex.

Its subcellular location is the cell inner membrane. The enzyme catalyses a quinone + NADH + 5 H(+)(in) = a quinol + NAD(+) + 4 H(+)(out). Functionally, NDH-1 shuttles electrons from NADH, via FMN and iron-sulfur (Fe-S) centers, to quinones in the respiratory chain. The immediate electron acceptor for the enzyme in this species is believed to be ubiquinone. Couples the redox reaction to proton translocation (for every two electrons transferred, four hydrogen ions are translocated across the cytoplasmic membrane), and thus conserves the redox energy in a proton gradient. This subunit may bind ubiquinone. This is NADH-quinone oxidoreductase subunit H from Rickettsia bellii (strain OSU 85-389).